The primary structure comprises 131 residues: Inner membrane protein YecN (131 aa).

Topologically, residues 1-107 are cytoplasmic; it reads MVSALYAVLS…RWRRSGMSAT (107 aa). The helical transmembrane segment at 108–128 threads the bilayer; it reads WCALLLMVLANLWYMPWELVF. The Periplasmic portion of the chain corresponds to 129–131; sequence SLR.

It is found in the cell inner membrane. The chain is Inner membrane protein YecN (yecN) from Escherichia coli O6:H1 (strain CFT073 / ATCC 700928 / UPEC).